The chain runs to 604 residues: Numb-like protein (604 aa).

4 disordered regions span residues 1–68 (MSRS…QWQA), 223–283 (GSFR…PVAA), 372–457 (ASAG…TLQP), and 531–604 (KAGA…EIEL). Residues 74–225 (RKGTCSFPVR…RTSFAREGSF (152 aa)) form the PID domain. Phosphoserine occurs at positions 224 and 228. Basic and acidic residues predominate over residues 233 to 245 (PAEREAGDKKKAE). A compositionally biased stretch (low complexity) spans 246-260 (AAAAPAVAPGPAQPG). Position 263 is a phosphoserine (S263). The residue at position 279 (T279) is a Phosphothreonine. Positions 409 to 418 (TPSEAERWLE) are enriched in basic and acidic residues. Residue S411 is modified to Phosphoserine. Composition is skewed to low complexity over residues 427–441 (QQQQQQQQQQQQQQQ) and 542–552 (SAPGGQARPRP). Positions 553–568 (NGAPWPPEPAPAPAPE) are enriched in pro residues.

As to quaternary structure, interacts (via PTB domain) with MAP3K7IP2 (via C-terminal). Interacts (via C-terminal) with TRAF6 (via TRAF domains). Associates with EPS15 and NOTCH1. As to expression, preferentially expressed in the nervous system. In the developing neocortex, expressed in postmitotic neurons in the cortical plate but not in progenitors within the ventricular zone.

It is found in the cytoplasm. Plays a role in the process of neurogenesis. Required throughout embryonic neurogenesis to maintain neural progenitor cells, also called radial glial cells (RGCs), by allowing their daughter cells to choose progenitor over neuronal cell fate. Not required for the proliferation of neural progenitor cells before the onset of embryonic neurogenesis. Also required postnatally in the subventricular zone (SVZ) neurogenesis by regulating SVZ neuroblasts survival and ependymal wall integrity. Negative regulator of NF-kappa-B signaling pathway. The inhibition of NF-kappa-B activation is mediated at least in part, by preventing MAP3K7IP2 to interact with polyubiquitin chains of TRAF6 and RIPK1 and by stimulating the 'Lys-48'-linked polyubiquitination and degradation of TRAF6 in cortical neurons. This Mus musculus (Mouse) protein is Numb-like protein (Numbl).